We begin with the raw amino-acid sequence, 288 residues long: 2-hydroxy-6-oxononadienedioate/2-hydroxy-6-oxononatrienedioate hydrolase (288 aa).

The active-site Proton acceptor is the H267.

This sequence belongs to the AB hydrolase superfamily. MhpC family. In terms of assembly, homodimer.

It catalyses the reaction (2Z,4E)-2-hydroxy-6-oxonona-2,4-dienedioate + H2O = (2Z)-2-hydroxypenta-2,4-dienoate + succinate + H(+). The catalysed reaction is (2Z,4E,7E)-2-hydroxy-6-oxonona-2,4,7-trienedioate + H2O = (2Z)-2-hydroxypenta-2,4-dienoate + fumarate + H(+). It participates in aromatic compound metabolism; 3-phenylpropanoate degradation. In terms of biological role, catalyzes the cleavage of the C5-C6 bond of 2-hydroxy-6-oxononadienedioate and 2-hydroxy-6-oxononatrienedioate, a dienol ring fission product of the bacterial meta-cleavage pathway for degradation of phenylpropionic acid. The chain is 2-hydroxy-6-oxononadienedioate/2-hydroxy-6-oxononatrienedioate hydrolase from Escherichia coli O81 (strain ED1a).